Here is a 441-residue protein sequence, read N- to C-terminus: Amino-acid acetyltransferase (441 aa).

Positions 295-434 (EQVRRATIND…QALYNYQRRS (140 aa)) constitute an N-acetyltransferase domain.

Belongs to the acetyltransferase family. ArgA subfamily. Homohexamer.

Its subcellular location is the cytoplasm. It catalyses the reaction L-glutamate + acetyl-CoA = N-acetyl-L-glutamate + CoA + H(+). Its pathway is amino-acid biosynthesis; L-arginine biosynthesis; N(2)-acetyl-L-ornithine from L-glutamate: step 1/4. This Serratia proteamaculans (strain 568) protein is Amino-acid acetyltransferase.